Reading from the N-terminus, the 191-residue chain is DNA-directed RNA polymerase subunit Rpo3 (191 aa).

It belongs to the archaeal Rpo3/eukaryotic RPB3 RNA polymerase subunit family. As to quaternary structure, part of the RNA polymerase complex. Interacts with Rpo12. Forms an Rpo3-Rpo10-Rpo11-Rpo12 complex upon coexpression.

Its subcellular location is the cytoplasm. It carries out the reaction RNA(n) + a ribonucleoside 5'-triphosphate = RNA(n+1) + diphosphate. In terms of biological role, DNA-dependent RNA polymerase (RNAP) catalyzes the transcription of DNA into RNA using the four ribonucleoside triphosphates as substrates. The chain is DNA-directed RNA polymerase subunit Rpo3 from Methanocaldococcus jannaschii (strain ATCC 43067 / DSM 2661 / JAL-1 / JCM 10045 / NBRC 100440) (Methanococcus jannaschii).